We begin with the raw amino-acid sequence, 164 residues long: Large ribosomal subunit protein uL10 (164 aa).

Belongs to the universal ribosomal protein uL10 family. As to quaternary structure, part of the ribosomal stalk of the 50S ribosomal subunit. The N-terminus interacts with L11 and the large rRNA to form the base of the stalk. The C-terminus forms an elongated spine to which L12 dimers bind in a sequential fashion forming a multimeric L10(L12)X complex.

Forms part of the ribosomal stalk, playing a central role in the interaction of the ribosome with GTP-bound translation factors. The sequence is that of Large ribosomal subunit protein uL10 from Aliivibrio salmonicida (strain LFI1238) (Vibrio salmonicida (strain LFI1238)).